The sequence spans 638 residues: Fructose-1,6-bisphosphatase class 3 (638 aa).

It belongs to the FBPase class 3 family. Mn(2+) serves as cofactor.

The enzyme catalyses beta-D-fructose 1,6-bisphosphate + H2O = beta-D-fructose 6-phosphate + phosphate. It participates in carbohydrate biosynthesis; gluconeogenesis. The chain is Fructose-1,6-bisphosphatase class 3 from Pediococcus pentosaceus (strain ATCC 25745 / CCUG 21536 / LMG 10740 / 183-1w).